The chain runs to 288 residues: ATP synthase gamma chain (288 aa).

Belongs to the ATPase gamma chain family. As to quaternary structure, F-type ATPases have 2 components, CF(1) - the catalytic core - and CF(0) - the membrane proton channel. CF(1) has five subunits: alpha(3), beta(3), gamma(1), delta(1), epsilon(1). CF(0) has three main subunits: a, b and c.

Its subcellular location is the cell inner membrane. Functionally, produces ATP from ADP in the presence of a proton gradient across the membrane. The gamma chain is believed to be important in regulating ATPase activity and the flow of protons through the CF(0) complex. In Vesicomyosocius okutanii subsp. Calyptogena okutanii (strain HA), this protein is ATP synthase gamma chain.